The sequence spans 166 residues: Small ribosomal subunit protein uS5 (166 aa).

Positions 11–74 (LEDRVVAINR…EDAKKNLVEV (64 aa)) constitute an S5 DRBM domain.

The protein belongs to the universal ribosomal protein uS5 family. In terms of assembly, part of the 30S ribosomal subunit. Contacts proteins S4 and S8.

Functionally, with S4 and S12 plays an important role in translational accuracy. In terms of biological role, located at the back of the 30S subunit body where it stabilizes the conformation of the head with respect to the body. This Enterococcus faecalis (strain ATCC 700802 / V583) protein is Small ribosomal subunit protein uS5.